A 218-amino-acid chain; its full sequence is GTP cyclohydrolase 1 (218 aa).

Positions 109, 112, and 180 each coordinate Zn(2+).

Belongs to the GTP cyclohydrolase I family. Toroid-shaped homodecamer, composed of two pentamers of five dimers.

It catalyses the reaction GTP + H2O = 7,8-dihydroneopterin 3'-triphosphate + formate + H(+). Its pathway is cofactor biosynthesis; 7,8-dihydroneopterin triphosphate biosynthesis; 7,8-dihydroneopterin triphosphate from GTP: step 1/1. In Actinobacillus pleuropneumoniae serotype 5b (strain L20), this protein is GTP cyclohydrolase 1.